Consider the following 215-residue polypeptide: Sodium channel regulatory subunit beta-3 (215 aa).

The N-terminal stretch at 1–22 is a signal peptide; it reads MPAFNRLFPLASLVLIYWVSVC. At 23–156 the chain is on the extracellular side; the sequence is FPVCVEVPSE…EEAGEDFTSV (134 aa). 2 disulfide bridges follow: Cys26/Cys48 and Cys45/Cys120. An Ig-like C2-type domain is found at 32 to 154; it reads ETEAVQGNPM…VTEEAGEDFT (123 aa). N-linked (GlcNAc...) asparagine glycans are attached at residues Asn95, Asn109, Asn113, and Asn121. A helical transmembrane segment spans residues 157 to 178; it reads VSEIMMYILLVFLTLWLLIEMI. At 179–215 the chain is on the cytoplasmic side; the sequence is YCYRKVSKAEEAAQENASDYLAIPSENKENSAVPVEE.

It belongs to the sodium channel auxiliary subunit SCN3B (TC 8.A.17) family. As to quaternary structure, a voltage-gated sodium (Nav) channel consists of an ion-conducting pore-forming alpha subunit functional on its own that is regulated by one or more beta subunits. Forms homodimers and homotrimers. SCN3B is non-covalently associated with alpha subunits and induces the formation of alpha subunit oligomers, including trimers. Interacts with SCN5A/Nav1.5; regulatory subunit of SCN5A/Nav1.5. Interacts with SCN7A/Nav2.1; probable regulatory subunit of SCN7A/Nav2.1. Interacts with SCN10A; regulatory subunit of SCN10A/Nav1.8. Interacts with NFASC; probably involved in targeting the sodium channels to the nodes of Ranvier. In terms of processing, intramolecular disulfide bonds favor the voltage-gated sodium channel oligomeric complex assembly. Post-translationally, N-glycosylated. As to expression, expressed in the atrium.

It localises to the cell membrane. Regulatory subunit of multiple voltage-gated sodium (Nav) channels directly mediating the depolarization of excitable membranes. Navs, also called VGSCs (voltage-gated sodium channels) or VDSCs (voltage-dependent sodium channels), operate by switching between closed and open conformations depending on the voltage difference across the membrane. In the open conformation they allow Na(+) ions to selectively pass through the pore, along their electrochemical gradient. The influx of Na+ ions provokes membrane depolarization, initiating the propagation of electrical signals throughout cells and tissues. The accessory beta subunits participate in localization and functional modulation of the Nav channels. Modulates the activity of SCN2A/Nav1.2, causing a hyperpolarizing shift in the voltage-dependence of inactivation of the channel and increasing the fraction of channels operating in the fast gating mode. Modulates the activity of SCN5A/Nav1.5. Could also regulate the atypical sodium channel SCN7A/Nav2.1. Modulates the activity of SCN10A/Nav1.8, regulating its oligomerization and accelerating the recovery from inactivation. This is Sodium channel regulatory subunit beta-3 from Homo sapiens (Human).